The chain runs to 474 residues: ATP synthase subunit beta 2 (474 aa).

An ATP-binding site is contributed by 156–163 (GGAGVGKT).

It belongs to the ATPase alpha/beta chains family. F-type ATPases have 2 components, CF(1) - the catalytic core - and CF(0) - the membrane proton channel. CF(1) has five subunits: alpha(3), beta(3), gamma(1), delta(1), epsilon(1). CF(0) has three main subunits: a(1), b(2) and c(9-12). The alpha and beta chains form an alternating ring which encloses part of the gamma chain. CF(1) is attached to CF(0) by a central stalk formed by the gamma and epsilon chains, while a peripheral stalk is formed by the delta and b chains.

Its subcellular location is the cell inner membrane. It carries out the reaction ATP + H2O + 4 H(+)(in) = ADP + phosphate + 5 H(+)(out). Its function is as follows. Produces ATP from ADP in the presence of a proton gradient across the membrane. The catalytic sites are hosted primarily by the beta subunits. This chain is ATP synthase subunit beta 2, found in Shewanella frigidimarina (strain NCIMB 400).